We begin with the raw amino-acid sequence, 523 residues long: Sporulation protein 23 (523 aa).

In terms of assembly, interacts with SPO1 in meiosis.

In terms of biological role, regulates expression of PIS1. The sequence is that of Sporulation protein 23 (SPO23) from Saccharomyces cerevisiae (strain ATCC 204508 / S288c) (Baker's yeast).